The following is a 202-amino-acid chain: Orotate phosphoribosyltransferase (202 aa).

Residues Lys93 and 113 to 121 each bind 5-phospho-alpha-D-ribose 1-diphosphate; that span reads EDIITTGGS. Orotate is bound by residues Thr117 and Arg145.

The protein belongs to the purine/pyrimidine phosphoribosyltransferase family. PyrE subfamily. Homodimer. It depends on Mg(2+) as a cofactor.

It catalyses the reaction orotidine 5'-phosphate + diphosphate = orotate + 5-phospho-alpha-D-ribose 1-diphosphate. Its pathway is pyrimidine metabolism; UMP biosynthesis via de novo pathway; UMP from orotate: step 1/2. Catalyzes the transfer of a ribosyl phosphate group from 5-phosphoribose 1-diphosphate to orotate, leading to the formation of orotidine monophosphate (OMP). This chain is Orotate phosphoribosyltransferase, found in Campylobacter jejuni subsp. doylei (strain ATCC BAA-1458 / RM4099 / 269.97).